A 370-amino-acid polypeptide reads, in one-letter code: Histidinol-phosphate aminotransferase 1 (370 aa).

An N6-(pyridoxal phosphate)lysine modification is found at Lys229.

The protein belongs to the class-II pyridoxal-phosphate-dependent aminotransferase family. Histidinol-phosphate aminotransferase subfamily. In terms of assembly, homodimer. Pyridoxal 5'-phosphate is required as a cofactor.

It catalyses the reaction L-histidinol phosphate + 2-oxoglutarate = 3-(imidazol-4-yl)-2-oxopropyl phosphate + L-glutamate. Its pathway is amino-acid biosynthesis; L-histidine biosynthesis; L-histidine from 5-phospho-alpha-D-ribose 1-diphosphate: step 7/9. The protein is Histidinol-phosphate aminotransferase 1 of Nitrosococcus oceani (strain ATCC 19707 / BCRC 17464 / JCM 30415 / NCIMB 11848 / C-107).